Here is a 257-residue protein sequence, read N- to C-terminus: Probable amino-acid ABC transporter ATP-binding protein HI_1078 (257 aa).

The region spanning 4-244 (LKVSNIQKNF…PQHERTKQFL (241 aa)) is the ABC transporter domain. 36-43 (GPSGSGKT) provides a ligand contact to ATP.

This sequence belongs to the ABC transporter superfamily.

It is found in the cell inner membrane. In terms of biological role, probably part of a binding-protein-dependent transport system for an amino acid. Probably responsible for energy coupling to the transport system. The sequence is that of Probable amino-acid ABC transporter ATP-binding protein HI_1078 from Haemophilus influenzae (strain ATCC 51907 / DSM 11121 / KW20 / Rd).